A 66-amino-acid polypeptide reads, in one-letter code: Large ribosomal subunit protein bL31 (66 aa).

Zn(2+)-binding residues include Cys16, Cys18, Cys36, and Cys39.

This sequence belongs to the bacterial ribosomal protein bL31 family. Type A subfamily. In terms of assembly, part of the 50S ribosomal subunit. The cofactor is Zn(2+).

Functionally, binds the 23S rRNA. The polypeptide is Large ribosomal subunit protein bL31 (Geobacillus kaustophilus (strain HTA426)).